We begin with the raw amino-acid sequence, 238 residues long: Cysteine-rich venom protein (238 aa).

Positions 1–19 (MIAFIVLLSLAAVLQQSSG) are cleaved as a signal peptide. Residues 38–164 (VDKHNALRRS…STKYLYVCQY (127 aa)) enclose the SCP domain. Disulfide bonds link cysteine 75/cysteine 153, cysteine 92/cysteine 165, cysteine 148/cysteine 162, cysteine 184/cysteine 191, cysteine 187/cysteine 196, cysteine 200/cysteine 233, cysteine 209/cysteine 227, and cysteine 218/cysteine 231. The ShKT domain maps to 200–233 (CKYEDAFTNCKALAKKTKCKTEWIKSKCPATCFC).

Belongs to the CRISP family. As to expression, expressed by the venom gland.

It is found in the secreted. In terms of biological role, blocks contraction of smooth muscle elicited by high potassium-induced depolarization, but does not block caffeine-stimulated contraction. May target voltage-gated calcium channels on smooth muscle. This Austrelaps superbus (Lowland copperhead snake) protein is Cysteine-rich venom protein.